Reading from the N-terminus, the 235-residue chain is Large ribosomal subunit protein uL4 (235 aa).

The disordered stretch occupies residues 45–75 (RAGTASTKTRGEVSGGGRKPWPQKHTGRARH). The span at 65-75 (WPQKHTGRARH) shows a compositional bias: basic residues.

It belongs to the universal ribosomal protein uL4 family. In terms of assembly, part of the 50S ribosomal subunit.

Its function is as follows. One of the primary rRNA binding proteins, this protein initially binds near the 5'-end of the 23S rRNA. It is important during the early stages of 50S assembly. It makes multiple contacts with different domains of the 23S rRNA in the assembled 50S subunit and ribosome. Functionally, forms part of the polypeptide exit tunnel. The protein is Large ribosomal subunit protein uL4 of Thermotoga petrophila (strain ATCC BAA-488 / DSM 13995 / JCM 10881 / RKU-1).